The primary structure comprises 921 residues: Phototropin-1B (921 aa).

The segment covering 1-11 (MASKGTEGGHG) has biased composition (gly residues). 2 disordered regions span residues 1-59 (MASK…SPFL) and 88-118 (TGLPQGVSARPSSGSARTSSEDNPQQQQSAA). Over residues 40–51 (SSASSFRTAAAA) the composition is skewed to low complexity. The span at 97 to 117 (RPSSGSARTSSEDNPQQQQSA) shows a compositional bias: polar residues. Residues 123–197 (VSEELRAALS…KIRQSLANGS (75 aa)) enclose the PAS 1 domain. FMN is bound by residues 172-177 (NCRFLQ), Arg-190, Asn-205, Asn-215, and Gln-236. S-4a-FMN cysteine is present on Cys-173. The region spanning 197–251 (SNYCGRILNYKKDGTPFWNLLTIAPIKDEDGRLLKFIGMQVEVSKYTEGKKDTVV) is the PAC 1 domain. Polar residues predominate over residues 286-295 (RSLSESSNNT). Disordered stretches follow at residues 286 to 345 (RSLS…QVNR) and 366 to 391 (EKNMLKPRDEDPLIDSDDERPESFED). Basic and acidic residues-rich tracts occupy residues 312–321 (PSKRSSESGS) and 366–376 (EKNMLKPRDED). The PAS 2 domain maps to 400–473 (RGIDLATTLE…RKIRDAIDNQ (74 aa)). Residues 449–454 (NCRFLQ), Arg-467, Asn-482, Asn-492, and Gln-513 each bind FMN. Cys-450 is subject to S-4a-FMN cysteine. The PAC 2 domain maps to 474-528 (AEVTVQLINYTKSGKKFWNLFHLQPMRDQKGDVQYFIGVQLDGTEHVQDDAAKEG). A Protein kinase domain is found at 594–881 (FRPVKPLGSG…ANEIKGHPFF (288 aa)). Residues 600 to 608 (LGSGDTGSV) and Lys-623 each bind ATP. The active-site Proton acceptor is Asp-719.

Belongs to the protein kinase superfamily. Ser/Thr protein kinase family. Homodimer. FMN is required as a cofactor. In terms of processing, autophosphorylated in response to blue light irradiation. Post-translationally, 2 molecules of FMN bind covalently to cysteines after exposure to blue light and are reversed in the dark.

It catalyses the reaction L-seryl-[protein] + ATP = O-phospho-L-seryl-[protein] + ADP + H(+). The enzyme catalyses L-threonyl-[protein] + ATP = O-phospho-L-threonyl-[protein] + ADP + H(+). Protein kinase that acts as a blue light photoreceptor in a signal-transduction pathway for phototropic responses. Regulates a wide range of physiological activities in plants that maximize the efficiency of photosynthesis, such as chloroplast relocations, stomata opening, and leaf expansion. This Oryza sativa subsp. japonica (Rice) protein is Phototropin-1B (PHOT1B).